The sequence spans 648 residues: Putative potassium transport protein DDB_G0292412 (648 aa).

A helical transmembrane segment spans residues 48–68; the sequence is LFLLVILVQLGSTVLLTLPIV. Asparagine 81 carries an N-linked (GlcNAc...) asparagine glycan. Disordered stretches follow at residues 106-145 and 223-261; these read HDFK…DDND and QQQQ…DSQS. The segment covering 110–129 has biased composition (acidic residues); it reads DDDDENDNNNNEENDDNDDE. The stretch at 199-227 forms a coiled coil; sequence IIQQQQQQQQQQQQQQQQQQQQQQQQQQQ. N-linked (GlcNAc...) asparagine glycans are attached at residues asparagine 239, asparagine 243, asparagine 247, asparagine 248, asparagine 254, and asparagine 257. 6 consecutive transmembrane segments (helical) span residues 313–333, 353–373, 385–405, 443–463, 472–491, and 505–525; these read LLVI…ISIG, GWWW…LALF, FLLI…PVFL, VQLF…MALL, NMNY…STRT, and SVLL…IISL. Asparagine 536 carries an N-linked (GlcNAc...) asparagine glycan. 3 helical membrane-spanning segments follow: residues 550–570, 571–591, and 592–612; these read IFVP…LLES, GVIT…NVGL, and SISI…MLAG.

Belongs to the TrkH potassium transport family.

The protein localises to the membrane. In terms of biological role, may function as a potassium transporter. The polypeptide is Putative potassium transport protein DDB_G0292412 (Dictyostelium discoideum (Social amoeba)).